The sequence spans 145 residues: uncharacterized protein (145 aa).

Met-1 carries the N-acetylmethionine modification. Positions 15-41 (QLKNNSGGTNGDRNSGANNGGGENSAP) are disordered. A compositionally biased stretch (polar residues) spans 16–27 (LKNNSGGTNGDR). A phosphoserine mark is found at Ser-121 and Ser-126. The segment at 125 to 145 (NSFDKQNAKNDDDEDDDDFFD) is disordered. Acidic residues predominate over residues 135-145 (DDDEDDDDFFD).

The protein belongs to the PDCD5 family.

This is an uncharacterized protein from Saccharomyces cerevisiae (strain ATCC 204508 / S288c) (Baker's yeast).